We begin with the raw amino-acid sequence, 403 residues long: Putative transport protein TP_0553 (403 aa).

The next 8 membrane-spanning stretches (helical) occupy residues 10-30 (ISLF…FVPY), 31-51 (LTVL…YRAL), 92-112 (AAVF…FIAI), 202-222 (LYFF…ALPL), 243-263 (KGLF…YGIF), 271-291 (LAML…CVWL), 293-313 (VGIS…LFVA), and 350-370 (TFGF…FTVI).

This sequence belongs to the autoinducer-2 exporter (AI-2E) (TC 2.A.86) family.

It localises to the cell membrane. This is Putative transport protein TP_0553 from Treponema pallidum (strain Nichols).